A 416-amino-acid chain; its full sequence is MEKLYVEGNKILNGHVIISGSKNAALPILFMTILTEGKIKIGNIPNLTDINIALKLLVYLGVKITGNETLCIDASSINIFCPPYNLINKIRASIWILGPLLARFGKAKIFLPGGCKIGSRPIDLHLNGLTQLGATINLKNNCIDAYVKGRLQGKYILMEKISVGATITIMSAATLAKGSTIIDNAACEPEIVDIAKFLNTLGADIIGAGSNKICIKGVLKLTGGTHQVIPDRIETGTFLVAAAASQGHITCHKTEPKHLTNVLMKLTEAGAKIKTGKDWIKLDMRGKRPKSLNICTAPYPGFPTDMQAQFALLNSISKGIGTITETIFENRFIYTSELIRMGAKIKIKNNTIICYGIPKLISSNVFSSDLRASATLILAGCIAAGITIVNHTYHLVRGYESFPKKLNKIGANIKII.

22–23 serves as a coordination point for phosphoenolpyruvate; it reads KN. Arg-91 contacts UDP-N-acetyl-alpha-D-glucosamine. Cys-115 functions as the Proton donor in the catalytic mechanism. Cys-115 is subject to 2-(S-cysteinyl)pyruvic acid O-phosphothioketal. UDP-N-acetyl-alpha-D-glucosamine contacts are provided by residues 120–124, Asp-305, and Ile-327; that span reads RPIDL.

This sequence belongs to the EPSP synthase family. MurA subfamily.

It localises to the cytoplasm. It carries out the reaction phosphoenolpyruvate + UDP-N-acetyl-alpha-D-glucosamine = UDP-N-acetyl-3-O-(1-carboxyvinyl)-alpha-D-glucosamine + phosphate. It functions in the pathway cell wall biogenesis; peptidoglycan biosynthesis. Functionally, cell wall formation. Adds enolpyruvyl to UDP-N-acetylglucosamine. The polypeptide is UDP-N-acetylglucosamine 1-carboxyvinyltransferase (Buchnera aphidicola subsp. Acyrthosiphon pisum (strain 5A)).